Here is a 796-residue protein sequence, read N- to C-terminus: Disintegrin and metalloproteinase domain-containing protein B (796 aa).

The N-terminal stretch at M1–A23 is a signal peptide. Residues R24–P706 are Extracellular-facing. Residues N33, N226, N313, and N407 are each glycosylated (N-linked (GlcNAc...) asparagine). The region spanning R271–T510 is the Peptidase M12B domain. 3 disulfide bridges follow: C395–C495, C448–C459, and C580–C600. H431 is a binding site for Zn(2+). The active site involves E432. Zn(2+)-binding residues include H435 and H441. In terms of domain architecture, Disintegrin spans G519–N608. Residues I707–I727 form a helical membrane-spanning segment. Over C728 to A796 the chain is Cytoplasmic. Positions R737 to A796 are disordered. Residues V775–Y786 are compositionally biased toward pro residues.

The cofactor is Zn(2+).

Its subcellular location is the membrane. Its function is as follows. Probable zinc protease. This Arthroderma otae (strain ATCC MYA-4605 / CBS 113480) (Microsporum canis) protein is Disintegrin and metalloproteinase domain-containing protein B (ADM-B).